Here is a 392-residue protein sequence, read N- to C-terminus: Formate-dependent phosphoribosylglycinamide formyltransferase (392 aa).

Residues 22–23 and Glu82 each bind N(1)-(5-phospho-beta-D-ribosyl)glycinamide; that span reads EL. ATP is bound by residues Arg114, Lys155, 160–165, 195–198, and Glu203; these read SSGKGQ and EGLV. The region spanning 119 to 308 is the ATP-grasp domain; it reads RLAAETLGVP…EFALHVRAFL (190 aa). Mg(2+) is bound by residues Glu267 and Glu279. Residues Asp286, Lys355, and 362-363 each bind N(1)-(5-phospho-beta-D-ribosyl)glycinamide; that span reads RR.

Belongs to the PurK/PurT family. Homodimer.

It carries out the reaction N(1)-(5-phospho-beta-D-ribosyl)glycinamide + formate + ATP = N(2)-formyl-N(1)-(5-phospho-beta-D-ribosyl)glycinamide + ADP + phosphate + H(+). It functions in the pathway purine metabolism; IMP biosynthesis via de novo pathway; N(2)-formyl-N(1)-(5-phospho-D-ribosyl)glycinamide from N(1)-(5-phospho-D-ribosyl)glycinamide (formate route): step 1/1. Involved in the de novo purine biosynthesis. Catalyzes the transfer of formate to 5-phospho-ribosyl-glycinamide (GAR), producing 5-phospho-ribosyl-N-formylglycinamide (FGAR). Formate is provided by PurU via hydrolysis of 10-formyl-tetrahydrofolate. The polypeptide is Formate-dependent phosphoribosylglycinamide formyltransferase (Pectobacterium carotovorum subsp. carotovorum (strain PC1)).